A 210-amino-acid polypeptide reads, in one-letter code: ATP-dependent Clp protease proteolytic subunit (210 aa).

Catalysis depends on Ser-106, which acts as the Nucleophile. His-131 is a catalytic residue.

Belongs to the peptidase S14 family. As to quaternary structure, fourteen ClpP subunits assemble into 2 heptameric rings which stack back to back to give a disk-like structure with a central cavity, resembling the structure of eukaryotic proteasomes.

Its subcellular location is the cytoplasm. It carries out the reaction Hydrolysis of proteins to small peptides in the presence of ATP and magnesium. alpha-casein is the usual test substrate. In the absence of ATP, only oligopeptides shorter than five residues are hydrolyzed (such as succinyl-Leu-Tyr-|-NHMec, and Leu-Tyr-Leu-|-Tyr-Trp, in which cleavage of the -Tyr-|-Leu- and -Tyr-|-Trp bonds also occurs).. In terms of biological role, cleaves peptides in various proteins in a process that requires ATP hydrolysis. Has a chymotrypsin-like activity. Plays a major role in the degradation of misfolded proteins. This is ATP-dependent Clp protease proteolytic subunit from Bartonella quintana (strain Toulouse) (Rochalimaea quintana).